A 279-amino-acid chain; its full sequence is Dehydrogenase/reductase SDR family member 4 (279 aa).

37-61 lines the NADP(+) pocket; it reads LVTASTDGIGLAIARRLAEDGAHVV. The residue at position 93 (Lys-93) is an N6-acetyllysine; alternate. At Lys-93 the chain carries N6-succinyllysine; alternate. N6-acetyllysine is present on Lys-106. Position 170 (Ser-170) interacts with substrate. The active-site Proton acceptor is the Tyr-183. Position 187 (Lys-187) interacts with NADP(+). Lys-217 is modified (N6-acetyllysine; alternate). Lys-217 is modified (N6-succinyllysine; alternate). Ser-221 is subject to Phosphoserine. 2 positions are modified to N6-succinyllysine: Lys-228 and Lys-235. The Peroxisomal targeting signal motif lies at 277 to 279; that stretch reads SRL.

Belongs to the short-chain dehydrogenases/reductases (SDR) family. In terms of assembly, homotetramer.

It is found in the peroxisome. It carries out the reaction a secondary alcohol + NADP(+) = a ketone + NADPH + H(+). It catalyses the reaction 3alpha-hydroxy-5beta-pregnan-20-one + NADP(+) = 5beta-pregnan-3,20-dione + NADPH + H(+). The enzyme catalyses 5beta-dihydrotestosterone + NADPH + H(+) = 5beta-androstane-3alpha,17beta-diol + NADP(+). The catalysed reaction is all-trans-retinol + NADP(+) = all-trans-retinal + NADPH + H(+). It carries out the reaction isatin + NADPH + H(+) = 3-hydroxyindolin-2-one + NADP(+). NADPH-dependent oxidoreductase which catalyzes the reduction of a variety of compounds bearing carbonyl groups including ketosteroids, alpha-dicarbonyl compounds, aldehydes, aromatic ketones and quinones. Reduces all-trans-retinal and 9-cis retinal. Reduces 3-ketosteroids and benzil into 3alpha-hydroxysteroids and S-benzoin, respectively, in contrast to the stereoselectivity of primates DHRS4s which produce 3beta-hydroxysteroids and R-benzoin. In the reverse reaction, catalyzes the NADP-dependent oxidation of 3alpha-hydroxysteroids and alcohol, but with much lower efficiency. Involved in the metabolism of 3alpha-hydroxysteroids, retinoid, isatin and xenobiotic carbonyl compounds. The protein is Dehydrogenase/reductase SDR family member 4 (Dhrs4) of Rattus norvegicus (Rat).